The following is a 119-amino-acid chain: Protein TusC (119 aa).

Belongs to the DsrF/TusC family. In terms of assembly, heterohexamer, formed by a dimer of trimers. The hexameric TusBCD complex contains 2 copies each of TusB, TusC and TusD. The TusBCD complex interacts with TusE.

The protein resides in the cytoplasm. Functionally, part of a sulfur-relay system required for 2-thiolation of 5-methylaminomethyl-2-thiouridine (mnm(5)s(2)U) at tRNA wobble positions. The polypeptide is Protein TusC (Sodalis glossinidius (strain morsitans)).